The chain runs to 559 residues: MAASKKAVLGPLVGAVDQGTSSTRFLVFNSKTAELLSHHQVEIKQEFPREGWVEQDPKEILHSVYECIEKTCEKLGQLNIDISNIKAIGVSNQRETTVVWDKITGEPLYNAVVWLDLRTQSTVESLSKRIPGNNNFVKSKTGLPLSTYFSAVKLRWLLDNVRKVQKAVEEKRALFGTIDSWLIWSLTGGVNGGVHCTDVTNASRTMLFNIHSLEWDKQLCEFFGIPMEILPNVRSSSEIYGLMKISHSVKAGALEGVPISGCLGDQSAALVGQMCFQIGQAKNTYGTGCFLLCNTGHKCVFSDHGLLTTVAYKLGRDKPVYYALEGSVAIAGAVIRWLRDNLGIIKTSEEIEKLAKEVGTSYGCYFVPAFSGLYAPYWEPSARGIICGLTQFTNKCHIAFAALEAVCFQTREILDAMNRDCGIPLSHLQVDGGMTSNKILMQLQADILYIPVVKPSMPETTALGAAMAAGAAEGVGVWSLEPEDLSAVTMERFEPQINAEESEIRYSTWKKAVMKSMGWVTTQSPESGDPSIFCSLPLGFFIVSSMVMLIGARYISGIP.

ADP is bound at residue Thr-20. ATP contacts are provided by Thr-20, Ser-21, and Ser-22. Thr-20 serves as a coordination point for sn-glycerol 3-phosphate. Arg-24 provides a ligand contact to ADP. The sn-glycerol 3-phosphate site is built by Arg-94, Glu-95, and Tyr-148. 3 residues coordinate glycerol: Arg-94, Glu-95, and Tyr-148. Residue Gly-252 coordinates beta-D-fructose 1,6-bisphosphate. Asp-265 contributes to the sn-glycerol 3-phosphate binding site. Residues Asp-265 and Gln-266 each contribute to the glycerol site. 4 residues coordinate ADP: Thr-287, Gly-332, Gly-433, and Asn-437. 3 residues coordinate ATP: Thr-287, Gly-332, and Gly-433. The helical transmembrane segment at 532-552 threads the bilayer; that stretch reads IFCSLPLGFFIVSSMVMLIGA.

Belongs to the FGGY kinase family. As to expression, widely expressed in fetal and adult tissues. In terms of tissue distribution, the sole isoform expressed in adult liver and kidney.

Its subcellular location is the mitochondrion outer membrane. The protein localises to the nucleus. It localises to the cytoplasm. It is found in the cytosol. The catalysed reaction is glycerol + ATP = sn-glycerol 3-phosphate + ADP + H(+). It participates in polyol metabolism; glycerol degradation via glycerol kinase pathway; sn-glycerol 3-phosphate from glycerol: step 1/1. Its activity is regulated as follows. Potassium and magnesium-dependent. Kinase that plays a key role in glycerol metabolism, catalyzing its phosphorylation to produce sn-glycerol 3-phosphate. Sn-glycerol 3-phosphate is a crucial intermediate in various metabolic pathways, such as the synthesis of glycerolipids and triglycerides, glycogenesis, glycolysis and gluconeogenesis. The polypeptide is Glycerol kinase (Homo sapiens (Human)).